The following is a 131-amino-acid chain: Bacteriohemerythrin (131 aa).

The Fe cation site is built by H20, E23, H56, E60, H75, H79, H117, and D122.

The protein belongs to the hemerythrin family. As to quaternary structure, monomer.

Its function is as follows. Oxygen-binding protein. May be involved in a storage mechanism or for delivery to oxygen-requiring enzymes. The oxygen-binding site contains two iron atoms. The polypeptide is Bacteriohemerythrin (Aquifex aeolicus (strain VF5)).